The sequence spans 107 residues: Nucleoid-associated protein RBE_0048 (107 aa).

It belongs to the YbaB/EbfC family. As to quaternary structure, homodimer.

The protein resides in the cytoplasm. Its subcellular location is the nucleoid. In terms of biological role, binds to DNA and alters its conformation. May be involved in regulation of gene expression, nucleoid organization and DNA protection. In Rickettsia bellii (strain RML369-C), this protein is Nucleoid-associated protein RBE_0048.